The primary structure comprises 394 residues: Phosphopentomutase (394 aa).

D13, D286, H291, D327, H328, and H339 together coordinate Mn(2+).

It belongs to the phosphopentomutase family. Requires Mn(2+) as cofactor.

Its subcellular location is the cytoplasm. It catalyses the reaction 2-deoxy-alpha-D-ribose 1-phosphate = 2-deoxy-D-ribose 5-phosphate. It carries out the reaction alpha-D-ribose 1-phosphate = D-ribose 5-phosphate. Its pathway is carbohydrate degradation; 2-deoxy-D-ribose 1-phosphate degradation; D-glyceraldehyde 3-phosphate and acetaldehyde from 2-deoxy-alpha-D-ribose 1-phosphate: step 1/2. Functionally, isomerase that catalyzes the conversion of deoxy-ribose 1-phosphate (dRib-1-P) and ribose 1-phosphate (Rib-1-P) to deoxy-ribose 5-phosphate (dRib-5-P) and ribose 5-phosphate (Rib-5-P), respectively. In Bacillus cereus (strain ATCC 10987 / NRS 248), this protein is Phosphopentomutase.